The following is a 253-amino-acid chain: Isoprenyl transferase (253 aa).

The active site involves D30. A Mg(2+)-binding site is contributed by D30. Substrate-binding positions include 31 to 34 (GNRR), W35, H51, and 79 to 81 (STE). The active-site Proton acceptor is N82. Residues F83, R85, R202, and 208-210 (RVS) contribute to the substrate site. E221 is a Mg(2+) binding site.

The protein belongs to the UPP synthase family. As to quaternary structure, homodimer. Requires Mg(2+) as cofactor.

Catalyzes the condensation of isopentenyl diphosphate (IPP) with allylic pyrophosphates generating different type of terpenoids. This Chlamydia trachomatis serovar D (strain ATCC VR-885 / DSM 19411 / UW-3/Cx) protein is Isoprenyl transferase.